The primary structure comprises 251 residues: Triosephosphate isomerase (251 aa).

Substrate is bound at residue 9–11; sequence NWK. Catalysis depends on H93, which acts as the Electrophile. The active-site Proton acceptor is E163. Residues G169, S209, and 230 to 231 contribute to the substrate site; that span reads GG.

The protein belongs to the triosephosphate isomerase family. Homodimer.

The protein resides in the cytoplasm. It catalyses the reaction D-glyceraldehyde 3-phosphate = dihydroxyacetone phosphate. The protein operates within carbohydrate biosynthesis; gluconeogenesis. Its pathway is carbohydrate degradation; glycolysis; D-glyceraldehyde 3-phosphate from glycerone phosphate: step 1/1. Its function is as follows. Involved in the gluconeogenesis. Catalyzes stereospecifically the conversion of dihydroxyacetone phosphate (DHAP) to D-glyceraldehyde-3-phosphate (G3P). In Ruegeria pomeroyi (strain ATCC 700808 / DSM 15171 / DSS-3) (Silicibacter pomeroyi), this protein is Triosephosphate isomerase.